A 199-amino-acid polypeptide reads, in one-letter code: Phycocyanobilin lyase CpcT (199 aa).

This sequence belongs to the CpcT/CpeT biliprotein lyase family.

Its function is as follows. Catalyzes the site-selective attachment of phycocyanobilin (PCB) to 'Cys-154' of C-phycocyanin subunit beta (CpcB) and to 'Cys-153' of phycoerythrocyanin subunit beta (PecB). Does not have chromophore lyase activity for ApcA1, ApcA2, ApcB, ApcD, ApcF or PecA. The protein is Phycocyanobilin lyase CpcT (cpcT1) of Nostoc sp. (strain PCC 7120 / SAG 25.82 / UTEX 2576).